Reading from the N-terminus, the 67-residue chain is Small ribosomal subunit protein eS17 (67 aa).

Belongs to the eukaryotic ribosomal protein eS17 family.

The protein is Small ribosomal subunit protein eS17 of Thermococcus onnurineus (strain NA1).